Reading from the N-terminus, the 551-residue chain is Palmdelphin (551 aa).

Met-1 is modified (N-acetylmethionine). Residues 12–106 adopt a coiled-coil conformation; the sequence is QAITDKRKIQ…LQISTKEEAI (95 aa). Residue Lys-125 forms a Glycyl lysine isopeptide (Lys-Gly) (interchain with G-Cter in SUMO2) linkage. At Ser-135 the chain carries Phosphoserine. A Glycyl lysine isopeptide (Lys-Gly) (interchain with G-Cter in SUMO1); alternate cross-link involves residue Lys-179. Lys-179 participates in a covalent cross-link: Glycyl lysine isopeptide (Lys-Gly) (interchain with G-Cter in SUMO2); alternate. The span at 248–259 shows a compositional bias: basic and acidic residues; sequence ERNSKSPTEYHE. Residues 248–280 are disordered; the sequence is ERNSKSPTEYHEPVYANPFYRPTTPQRETVTPG. Residues 270 to 280 are compositionally biased toward polar residues; sequence TTPQRETVTPG. The residue at position 271 (Thr-271) is a Phosphothreonine. Phosphoserine occurs at positions 321, 370, 384, and 385. Disordered stretches follow at residues 342–392 and 449–535; these read TPQK…QEDE and DEEE…EDPS. The span at 484-495 shows a compositional bias: basic and acidic residues; that stretch reads KRSEASPHENTN. Phosphoserine is present on residues Ser-498, Ser-515, and Ser-520.

The protein belongs to the paralemmin family. Interacts with GLUL. Post-translationally, phosphorylated. As to expression, ubiquitous. Most abundant in cardiac and skeletal muscle.

The protein localises to the cytoplasm. The protein resides in the cell projection. Its subcellular location is the dendrite. It localises to the dendritic spine. This Homo sapiens (Human) protein is Palmdelphin (PALMD).